The sequence spans 352 residues: MTIAIGKTQEKRGLFDVVDDWLRRDRFVFVGWSGLLLFPTAYLALGGWFTGTTFVTSWYTHGLATSYLEGCNFLTAAVSTPANSMGHSLLFLWGPEAQGDFTRWCQLGGLWTFVALHGSFALIGFMLRQFEIARSVKIRPYNAIAFSAPISVFVSVFLIYPLGQSGWFFAPSFGVAAIFRFILFFQGFHNWTLNPFHMMGVAGVLGAALLCAIHGATVENTLFEDGDGANTFRAFNPTQAEETYSMVTANRFWSQIFGVAFSNKRWLHFFMLFVPVTGLWMSAIGVVGLALNLRAYDFVSQEIRAAEDPEFETFYTKNILLNEGIRAWMAAQDQPHEKLVFPEEVLPRGNAL.

At Thr2 the chain carries N-acetylthreonine. Residue Thr2 is modified to Phosphothreonine. Residues 40–60 (TAYLALGGWFTGTTFVTSWYT) form a helical membrane-spanning segment. His117 is a chlorophyll a binding site. A helical membrane pass occupies residues 124–140 (GFMLRQFEIARSVKIRP). 2 residues coordinate pheophytin a: Gln129 and Asn142. The helical transmembrane segment at 152–165 (VFVSVFLIYPLGQS) threads the bilayer. His197 is a chlorophyll a binding site. The chain crosses the membrane as a helical span at residues 207 to 227 (AALLCAIHGATVENTLFEDGD). The a plastoquinone site is built by His214 and Phe261. His214 lines the Fe cation pocket. Residue His268 participates in Fe cation binding. The helical transmembrane segment at 278–294 (GLWMSAIGVVGLALNLR) threads the bilayer.

This sequence belongs to the reaction center PufL/M/PsbA/D family. As to quaternary structure, PSII is composed of 1 copy each of membrane proteins PsbA, PsbB, PsbC, PsbD, PsbE, PsbF, PsbH, PsbI, PsbJ, PsbK, PsbL, PsbM, PsbT, PsbX, PsbY, PsbZ, Psb30/Ycf12, at least 3 peripheral proteins of the oxygen-evolving complex and a large number of cofactors. It forms dimeric complexes. The D1/D2 heterodimer binds P680, chlorophylls that are the primary electron donor of PSII, and subsequent electron acceptors. It shares a non-heme iron and each subunit binds pheophytin, quinone, additional chlorophylls, carotenoids and lipids. There is also a Cl(-1) ion associated with D1 and D2, which is required for oxygen evolution. The PSII complex binds additional chlorophylls, carotenoids and specific lipids. is required as a cofactor.

Its subcellular location is the plastid. The protein localises to the chloroplast thylakoid membrane. It carries out the reaction 2 a plastoquinone + 4 hnu + 2 H2O = 2 a plastoquinol + O2. Its function is as follows. Photosystem II (PSII) is a light-driven water:plastoquinone oxidoreductase that uses light energy to abstract electrons from H(2)O, generating O(2) and a proton gradient subsequently used for ATP formation. It consists of a core antenna complex that captures photons, and an electron transfer chain that converts photonic excitation into a charge separation. The D1/D2 (PsbA/PsbD) reaction center heterodimer binds P680, the primary electron donor of PSII as well as several subsequent electron acceptors. D2 is needed for assembly of a stable PSII complex. In Chlorella vulgaris (Green alga), this protein is Photosystem II D2 protein.